Here is a 111-residue protein sequence, read N- to C-terminus: Secreted transmembrane peptide 5 (111 aa).

An N-terminal signal peptide occupies residues 1 to 46; sequence MRLSVFYIFITRLAMTKNATKNEMGSKSPNIVALVLPLLLILYTLS. The SCOOP motif motif lies at 66-79; the sequence is IVWTPHSNSCGGSP. The SxS motif essential for MIK2 binding motif lies at 72–74; it reads SNS. Residues 89–111 are disordered; that stretch reads TTGRPCRRSRPPGTNIPVSDQSP.

It belongs to the serine rich endogenous peptide (SCOOP) phytocytokine family. In terms of assembly, interacts with MIK2 (via extracellular leucine-rich repeat domain); this interaction triggers the formation of complex between MIK2 and the BAK1/SERK3 and SERK4 coreceptors, and subsequent BAK1 activation by phosphorylation. As to expression, mostly expressed in leaves, and, to a lower extent, in roots, stems, siliques, seeds and flowers.

The protein resides in the cell membrane. Its subcellular location is the secreted. It localises to the extracellular space. It is found in the apoplast. In terms of biological role, brassicaceae-specific phytocytokine (plant endogenous peptide released into the apoplast) perceived by MIK2 in a BAK1/SERK3 and SERK4 coreceptors-dependent manner, that modulates various physiological and antimicrobial processes including growth prevention and reactive oxygen species (ROS) response regulation. This is Secreted transmembrane peptide 5 from Arabidopsis thaliana (Mouse-ear cress).